A 614-amino-acid chain; its full sequence is Vitamin B12 transporter BtuB (614 aa).

The N-terminal stretch at 1-20 is a signal peptide; that stretch reads MIKKASLLTACSVTAFSAWA. The short motif at 26–33 is the TonB box element; it reads DTLVVTAN. The TBDR plug domain maps to 38–152; the sequence is PRSTVLAPTT…IGGVVNIITT (115 aa). Residues L83, S85, N92, and 110-111 contribute to the cyanocob(III)alamin site; that span reads VS. The region spanning 155 to 614 is the TBDR beta-barrel domain; sequence EPGTEISAGW…EYTLSGSYTF (460 aa). Beta stranded transmembrane passes span 158-165, 169-178, and 184-195; these read TEISAGWG, YQNYDVSTQQ, and TRVTLLGDYAHT. Positions 199, 211, 213, and 215 each coordinate Ca(2+). The next 2 membrane-spanning stretches (beta stranded) occupy residues 217-227 and 232-248; these read FLSKTLYGALE and DAWS…NRTN. The Ca(2+) site is built by Y249 and D250. Residue A251 participates in cyanocob(III)alamin binding. D261 serves as a coordination point for Ca(2+). A run of 14 beta stranded transmembrane segments spans residues 263–277, 279–296, 309–325, 328–337, 353–369, 371–381, 385–400, 403–417, 434–443, 449–458, 473–490, 494–509, 517–529, and 535–550; these read RKLY…LRYN, ELIK…KDYN, TLDE…NNII, HGNVGAGVDW, YDQR…QQVG, FTFEGAARSDD, FGRH…WEFI, YRFI…KAPN, KSKQWEGAFE, VNWRISGYRN, YYNE…TANF, PLTH…ARNA, RRAK…QLDW, and DWGI…YDKD. T309 contacts cyanocob(III)alamin. R517 contacts cyanocob(III)alamin. Y551 is a binding site for cyanocob(III)alamin. The next 3 beta stranded transmembrane spans lie at 558–572, 585–596, and 602–614; these read TVKM…LAVA, IANLFDKDYETV, and AGRE…SYTF. The short motif at 597-614 is the TonB C-terminal box element; it reads YGYQTAGREYTLSGSYTF.

Belongs to the TonB-dependent receptor family. BtuB (TC 1.B.14.3.1) subfamily.

It is found in the cell outer membrane. In terms of biological role, involved in the active translocation of vitamin B12 (cyanocobalamin) across the outer membrane to the periplasmic space. It derives its energy for transport by interacting with the trans-periplasmic membrane protein TonB. This Shigella dysenteriae serotype 1 (strain Sd197) protein is Vitamin B12 transporter BtuB.